A 388-amino-acid chain; its full sequence is 5-hydroxytryptamine receptor 1B (388 aa).

Positions 1–29 are disordered; that stretch reads MEQPSRLCSPPASGSLTSSQTNHSTFPNP. Residues 1–45 are Extracellular-facing; that stretch reads MEQPSRLCSPPASGSLTSSQTNHSTFPNPNCSAPDLEPYQDSIAL. Residues 12–29 show a composition bias toward polar residues; that stretch reads ASGSLTSSQTNHSTFPNP. Residues Asn22 and Asn30 are each glycosylated (N-linked (GlcNAc...) asparagine). The chain crosses the membrane as a helical span at residues 46–71; sequence PWKVLLATFLGLITLGTTLSNAFVIA. At 72–85 the chain is on the cytoplasmic side; that stretch reads TVSRTRKLHTPANY. The helical transmembrane segment at 86-110 threads the bilayer; the sequence is LIASLAVTDLLVSILVMPISTMYTV. At 111 to 118 the chain is on the extracellular side; sequence TGRWTLGQ. The chain crosses the membrane as a helical span at residues 119 to 144; it reads VVCDFWLSSDITCCTASILHLCVIAL. Residues Cys121 and Cys197 are joined by a disulfide bond. The ergotamine site is built by Asp128 and Thr133. Positions 145–147 match the DRY motif; important for ligand-induced conformation changes and signaling motif; sequence DRY. Over 145-164 the chain is Cytoplasmic; the sequence is DRYWAITDAVEYSAKRTPKR. The helical transmembrane segment at 165 to 183 threads the bilayer; the sequence is AAGMIIMVWVFSVSISMPP. Residues 184 to 203 lie on the Extracellular side of the membrane; the sequence is LFWRQAKAEEVADCSVNTDH. Val199 contacts ergotamine. A helical transmembrane segment spans residues 204–227; sequence ILYTVYSTVGAFYFPTLLLIALYG. Residues 228 to 313 lie on the Cytoplasmic side of the membrane; sequence RIYVEARSRI…AARERKATRT (86 aa). Residues 249 to 282 form a disordered region; it reads LTRAQLITDSPGSSSSGTSINSRAPEGPSESGSP. Residues 255-270 are compositionally biased toward low complexity; the sequence is ITDSPGSSSSGTSINS. Residues 314–335 traverse the membrane as a helical segment; it reads LGIILGAFIVCWLPFFIISLAL. Topologically, residues 336–345 are extracellular; that stretch reads PICDDACWFH. A helical membrane pass occupies residues 346-368; it reads LAIFDFFNWLGYLNSLINPIIYT. The NPxxY motif; important for ligand-induced conformation changes and signaling signature appears at 363 to 367; it reads NPIIY. Over 369 to 388 the chain is Cytoplasmic; sequence KSNDDFKQAFQKLMRFRRTS.

Belongs to the G-protein coupled receptor 1 family. Homodimer. Heterodimer with HTR1D. Post-translationally, phosphorylated. Desensitization of the receptor may be mediated by its phosphorylation. Palmitoylated.

The protein resides in the cell membrane. Functionally, G-protein coupled receptor for 5-hydroxytryptamine (serotonin). Also functions as a receptor for ergot alkaloid derivatives, various anxiolytic and antidepressant drugs and other psychoactive substances, such as lysergic acid diethylamide (LSD). Ligand binding causes a conformation change that triggers signaling via guanine nucleotide-binding proteins (G proteins) and modulates the activity of downstream effectors, such as adenylate cyclase. HTR1B is coupled to G(i)/G(o) G alpha proteins and mediates inhibitory neurotransmission by inhibiting adenylate cyclase activity. Arrestin family members inhibit signaling via G proteins and mediate activation of alternative signaling pathways. Regulates the release of 5-hydroxytryptamine, dopamine and acetylcholine in the brain, and thereby affects neural activity, nociceptive processing, pain perception, mood and behavior. Besides, plays a role in vasoconstriction of cerebral arteries. The sequence is that of 5-hydroxytryptamine receptor 1B (HTR1B) from Didelphis virginiana (North American opossum).